Here is a 387-residue protein sequence, read N- to C-terminus: MTVINMKDVDLANKRVLIREDLNVPVKDGKVTSDARIRAALPTIKMALEAGAKVMVMSHLGRPTEGQYEEEYSLQPVATHIAGLLGQDVPLVKDWLDGVEVESGQLVLVENVRFNLGEKKDDEALSKKMAALCDVFVMDAFGTAHRAQASTHGVAKFAPIACAGPLLSAELEALEKALAKPARPMAAIVGGSKVSTKLTVLESLSDKVDQLIVGGGIANTFLAAAGFPVGKSLYEEDLIPQAKALMAKTSIPLPEDVVVATAFAPDAVATVKDAADVGPDDMILDIGPKAAAAFAALLEESQTIIWNGPVGVFEFDQFGGGTKALAMAIANSKGFSIAGGGDTLAAVDKYDIADQVSYISTGGGAFLEFVEGKVLPAVAMLESRAQN.

Substrate contacts are provided by residues 21–23 (DLN), arginine 36, 59–62 (HLGR), arginine 113, and arginine 146. ATP-binding positions include lysine 197, glutamate 314, and 340-343 (GGDT).

It belongs to the phosphoglycerate kinase family. In terms of assembly, monomer.

The protein resides in the cytoplasm. It catalyses the reaction (2R)-3-phosphoglycerate + ATP = (2R)-3-phospho-glyceroyl phosphate + ADP. It functions in the pathway carbohydrate degradation; glycolysis; pyruvate from D-glyceraldehyde 3-phosphate: step 2/5. In Marinomonas sp. (strain MWYL1), this protein is Phosphoglycerate kinase.